Reading from the N-terminus, the 202-residue chain is Probable GTP-binding protein EngB (202 aa).

The region spanning 22–197 (VFPEYAFIGR…LDYIENISKE (176 aa)) is the EngB-type G domain. GTP is bound by residues 30 to 37 (GRSNVGKS), 57 to 61 (GKTML), 75 to 78 (DLPG), 142 to 145 (TKAD), and 173 to 178 (YFISSS). Residues S37 and T59 each contribute to the Mg(2+) site.

The protein belongs to the TRAFAC class TrmE-Era-EngA-EngB-Septin-like GTPase superfamily. EngB GTPase family. Requires Mg(2+) as cofactor.

In terms of biological role, necessary for normal cell division and for the maintenance of normal septation. The protein is Probable GTP-binding protein EngB of Bacteroides thetaiotaomicron (strain ATCC 29148 / DSM 2079 / JCM 5827 / CCUG 10774 / NCTC 10582 / VPI-5482 / E50).